The sequence spans 351 residues: Tryptophan--tRNA ligase 2 (351 aa).

The interval 1 to 24 (MPFVDLEVPTMTTPTPAATPARPR) is disordered. Low complexity predominate over residues 9-24 (PTMTTPTPAATPARPR). The 'HIGH' region motif lies at 31–39 (PTGALHLGH). The 'KMSKS' region signature appears at 215–219 (KMSKS). K218 contributes to the ATP binding site.

It belongs to the class-I aminoacyl-tRNA synthetase family. In terms of assembly, homodimer. Forms a complex with nos; one homodimer of trpS2 binds one homodimer of nos.

It catalyses the reaction tRNA(Trp) + L-tryptophan + ATP = L-tryptophyl-tRNA(Trp) + AMP + diphosphate + H(+). Catalyzes the formation of 5'adenyl-Trp and tRNA(Trp) but with 5-fold less activity than TrpRS. Increases the solubility of the nitric oxide synthase oxygenase (nos), as well as its affinity for substrate L-arginine and its nitric-oxide synthase activity. The complex between trpS2 and nos catalyzes the regioselective nitration of tryptophan at the 4-position. The chain is Tryptophan--tRNA ligase 2 (trpS2) from Deinococcus radiodurans (strain ATCC 13939 / DSM 20539 / JCM 16871 / CCUG 27074 / LMG 4051 / NBRC 15346 / NCIMB 9279 / VKM B-1422 / R1).